Reading from the N-terminus, the 334-residue chain is Thioredoxin reductase (334 aa).

FAD contacts are provided by residues 11–14, 40–41, Gln45, Asn54, Cys148, Asp294, and 301–303; these read SGAG, TA, and RQA. A disulfide bond links Cys145 and Cys148.

This sequence belongs to the class-II pyridine nucleotide-disulfide oxidoreductase family. In terms of assembly, homodimer. Requires FAD as cofactor.

The catalysed reaction is [thioredoxin]-dithiol + NADP(+) = [thioredoxin]-disulfide + NADPH + H(+). In terms of biological role, component of the thioredoxin-thioredoxin reductase system which may be involved in biosynthesis of penicillins and cephalosporins and may be important in determining the thiol-disulfide redox balance. In Penicillium chrysogenum (Penicillium notatum), this protein is Thioredoxin reductase (TRR1).